The chain runs to 558 residues: Polypeptide N-acetylgalactosaminyltransferase 16 (558 aa).

At 1-6 the chain is on the cytoplasmic side; sequence MRKIRA. A helical; Signal-anchor for type II membrane protein transmembrane segment spans residues 7–26; it reads NAIAILTVAWILGTFYYLWQ. The Lumenal portion of the chain corresponds to 27–558; it reads DNRAHAASSG…AQQWQLLPHT (532 aa). Positions 33–54 are disordered; it reads ASSGGRGAQRAGRRSEQLREDR. The span at 45 to 54 shows a compositional bias: basic and acidic residues; that stretch reads RRSEQLREDR. 5 disulfide bridges follow: cysteine 113–cysteine 340, cysteine 331–cysteine 409, cysteine 441–cysteine 460, cysteine 486–cysteine 506, and cysteine 530–cysteine 543. The segment at 122–227 is catalytic subdomain A; the sequence is LPATSVIITF…TEWLPPMLQR (106 aa). Residues aspartate 163 and arginine 188 each coordinate substrate. Residue aspartate 211 participates in Mn(2+) binding. Serine 212 is a substrate binding site. Histidine 213 serves as a coordination point for Mn(2+). The interval 286–348 is catalytic subdomain B; the sequence is PIRTPVIAGG…PCSRVGHVFR (63 aa). Tryptophan 317 contributes to the substrate binding site. Position 345 (histidine 345) interacts with Mn(2+). The substrate site is built by arginine 348, histidine 351, and tyrosine 353. Positions 428 to 555 constitute a Ricin B-type lectin domain; it reads KEALPGIIKQ…DAQAQQWQLL (128 aa).

It belongs to the glycosyltransferase 2 family. GalNAc-T subfamily. Requires Mn(2+) as cofactor.

The protein resides in the golgi apparatus membrane. The enzyme catalyses L-seryl-[protein] + UDP-N-acetyl-alpha-D-galactosamine = a 3-O-[N-acetyl-alpha-D-galactosaminyl]-L-seryl-[protein] + UDP + H(+). It carries out the reaction L-threonyl-[protein] + UDP-N-acetyl-alpha-D-galactosamine = a 3-O-[N-acetyl-alpha-D-galactosaminyl]-L-threonyl-[protein] + UDP + H(+). It participates in protein modification; protein glycosylation. Functionally, catalyzes the initial reaction in O-linked oligosaccharide biosynthesis, the transfer of an N-acetyl-D-galactosamine residue to a serine or threonine residue on the protein receptor. This Homo sapiens (Human) protein is Polypeptide N-acetylgalactosaminyltransferase 16 (GALNT16).